Consider the following 260-residue polypeptide: Putative imidazole glycerol phosphate synthase subunit hisF3 (260 aa).

Aspartate 135 is a catalytic residue.

This sequence belongs to the HisA/HisF family. As to quaternary structure, heterodimer of HisH and HisF.

Its subcellular location is the cytoplasm. It catalyses the reaction 5-[(5-phospho-1-deoxy-D-ribulos-1-ylimino)methylamino]-1-(5-phospho-beta-D-ribosyl)imidazole-4-carboxamide + L-glutamine = D-erythro-1-(imidazol-4-yl)glycerol 3-phosphate + 5-amino-1-(5-phospho-beta-D-ribosyl)imidazole-4-carboxamide + L-glutamate + H(+). It participates in amino-acid biosynthesis; L-histidine biosynthesis; L-histidine from 5-phospho-alpha-D-ribose 1-diphosphate: step 5/9. In terms of biological role, IGPS catalyzes the conversion of PRFAR and glutamine to IGP, AICAR and glutamate. The HisF subunit catalyzes the cyclization activity that produces IGP and AICAR from PRFAR using the ammonia provided by the HisH subunit. This chain is Putative imidazole glycerol phosphate synthase subunit hisF3 (hisF3), found in Vibrio vulnificus (strain YJ016).